We begin with the raw amino-acid sequence, 542 residues long: CTP synthase (542 aa).

The amidoligase domain stretch occupies residues 1-265 (MTRYIFVTGG…DEIIVERFGL (265 aa)). S13 provides a ligand contact to CTP. S13 serves as a coordination point for UTP. Residues 14 to 19 (SLGKGI) and D71 contribute to the ATP site. 2 residues coordinate Mg(2+): D71 and E139. CTP contacts are provided by residues 146–148 (DIE), 186–191 (KTKPTQ), and K222. UTP contacts are provided by residues 186–191 (KTKPTQ) and K222. In terms of domain architecture, Glutamine amidotransferase type-1 spans 290–541 (TIAMVGKYME…VRAALENAGG (252 aa)). An L-glutamine-binding site is contributed by G351. C378 functions as the Nucleophile; for glutamine hydrolysis in the catalytic mechanism. L-glutamine contacts are provided by residues 379–382 (LGLQ), E402, and R469. Residues H514 and E516 contribute to the active site.

It belongs to the CTP synthase family. As to quaternary structure, homotetramer.

The catalysed reaction is UTP + L-glutamine + ATP + H2O = CTP + L-glutamate + ADP + phosphate + 2 H(+). It catalyses the reaction L-glutamine + H2O = L-glutamate + NH4(+). It carries out the reaction UTP + NH4(+) + ATP = CTP + ADP + phosphate + 2 H(+). It functions in the pathway pyrimidine metabolism; CTP biosynthesis via de novo pathway; CTP from UDP: step 2/2. With respect to regulation, allosterically activated by GTP, when glutamine is the substrate; GTP has no effect on the reaction when ammonia is the substrate. The allosteric effector GTP functions by stabilizing the protein conformation that binds the tetrahedral intermediate(s) formed during glutamine hydrolysis. Inhibited by the product CTP, via allosteric rather than competitive inhibition. Its function is as follows. Catalyzes the ATP-dependent amination of UTP to CTP with either L-glutamine or ammonia as the source of nitrogen. Regulates intracellular CTP levels through interactions with the four ribonucleotide triphosphates. This chain is CTP synthase, found in Hahella chejuensis (strain KCTC 2396).